Reading from the N-terminus, the 932-residue chain is Protein hir1 (932 aa).

7 WD repeats span residues 16 to 55 (GHRLSIFSIHIHPDGSRIATGGLDGTIRIWSTEAINRENE), 72 to 111 (THTGTVTSVRFSPNGQYLASGSDDRVVIIWHKEEAIPGLG), 132 to 171 (GHDNDIQDLCWSYDSQLVVSVGLDSSIIVWNGTTFERLKR), 174 to 213 (AHQSHVKGITFDPAGKYFATESDDRTIKVWRVSDFSIEKT), 222 to 265 (PLST…SEIN), 268 to 316 (GHEG…PLLS), and 320 to 361 (VFQK…DMVS). Polar residues-rich tracts occupy residues 405–426 (STTDPTLVPQSSSTPKSAQKTP) and 441–453 (TVDTNKLTASKEQ). 2 disordered regions span residues 405–470 (STTD…NEIP) and 498–520 (TPSTSRLASTQLQHTGSSQLPPQ). Residues 498–507 (TPSTSRLAST) show a composition bias toward low complexity.

This sequence belongs to the WD repeat HIR1 family. In terms of assembly, interacts with his3 and slm9.

It localises to the cytoplasm. It is found in the nucleus. Its function is as follows. Probably required for replication-independent chromatin assembly. Required for transcriptional silencing in the outer repeat (otr) centromeric repeats and the Tf2 long terminal repeat retrotransposons. Repressor of histone gene transcription in G1 arrested cells. Required for repression of htb1 gene expression outside of S phase. This chain is Protein hir1 (hip1), found in Schizosaccharomyces pombe (strain 972 / ATCC 24843) (Fission yeast).